The following is a 451-amino-acid chain: Deoxyguanosinetriphosphate triphosphohydrolase-like protein (451 aa).

Positions 61 to 274 (RLTHSLEVAQ…MELADDIAYG (214 aa)) constitute an HD domain.

Belongs to the dGTPase family. Type 2 subfamily.

The protein is Deoxyguanosinetriphosphate triphosphohydrolase-like protein of Actinobacillus succinogenes (strain ATCC 55618 / DSM 22257 / CCUG 43843 / 130Z).